A 478-amino-acid polypeptide reads, in one-letter code: Putative UDP-glucose flavonoid 3-O-glucosyltransferase 3 (478 aa).

The protein belongs to the UDP-glycosyltransferase family.

The polypeptide is Putative UDP-glucose flavonoid 3-O-glucosyltransferase 3 (Fragaria ananassa (Strawberry)).